We begin with the raw amino-acid sequence, 461 residues long: MQDDNIKRRNDAIVAGRLFSGSVQDRETERCHHCGELLHPFPEPEYWMQYPLPTCCVLDGLKFCDDYRKPDCIAAYLVANPTPPEATTPAARRRTKARKSKPQTEDKDARIAALAATLPEDRAGLLAVAADAVAAVHDAVLNRADLVADVAGERYAAAVWKLNGGTFFGCAGDQDAAERVIERHCRATPGVVPMWGQEGDFLASVDGMRVWVEVESGYGGLTTVHFQFHAVDLDGPFISETGYRSHYDHARGGMTVDQVADGVLRALLRSHRRYLDARDQDRLADEPLPAWLAGITPPPRRVRAVVEDWRKPDELPPGFAWVDAVLPAHQAFIARKWAASAKAKLAAARAKAQEPAGQRREPVTPAKPEPEPAKDEDAPAWPATFFPGLRCEIVSVHHPVFAKEIGKHVIITKISPETRQVWAHDDKPPRYRINRNGRKVCEYDPRCIESCYGYDQLRAAI.

2 disordered regions span residues 84–107 (PEAT…TEDK) and 349–379 (RAKA…EDAP). Residues 91–101 (ARRRTKARKSK) show a composition bias toward basic residues. Residues 357–377 (GQRREPVTPAKPEPEPAKDED) show a composition bias toward basic and acidic residues.

The chain is Protein KlcB (klcB) from Escherichia coli.